We begin with the raw amino-acid sequence, 212 residues long: ATP phosphoribosyltransferase (212 aa).

This sequence belongs to the ATP phosphoribosyltransferase family. Short subfamily. As to quaternary structure, heteromultimer composed of HisG and HisZ subunits.

The protein resides in the cytoplasm. The catalysed reaction is 1-(5-phospho-beta-D-ribosyl)-ATP + diphosphate = 5-phospho-alpha-D-ribose 1-diphosphate + ATP. The protein operates within amino-acid biosynthesis; L-histidine biosynthesis; L-histidine from 5-phospho-alpha-D-ribose 1-diphosphate: step 1/9. Catalyzes the condensation of ATP and 5-phosphoribose 1-diphosphate to form N'-(5'-phosphoribosyl)-ATP (PR-ATP). Has a crucial role in the pathway because the rate of histidine biosynthesis seems to be controlled primarily by regulation of HisG enzymatic activity. The sequence is that of ATP phosphoribosyltransferase from Geobacter metallireducens (strain ATCC 53774 / DSM 7210 / GS-15).